Here is a 146-residue protein sequence, read N- to C-terminus: Benzoylsuccinyl-CoA thiolase subunit BbsA (146 aa).

4 residues coordinate Zn(2+): cysteine 42, cysteine 45, cysteine 55, and cysteine 58.

The protein belongs to the BbsA family. Heterotetramer composed of two BbsA subunits and two BbsB subunits. Both BbsA and BbsB are essential for enzymatic activity.

The enzyme catalyses (S)-2-benzoylsuccinyl-CoA + CoA = benzoyl-CoA + succinyl-CoA. It participates in xenobiotic degradation; toluene degradation. In terms of biological role, component of the BbsAB thiolase complex, which catalyzes the thiolytic cleavage of (S)-2-benzoylsuccinyl-CoA to succinyl-CoA and benzoyl-CoA, the final step of anaerobic toluene metabolism. The BbsA subunit critically contributes to an induced-fit process for productive binding of a CoA substrate into the active site of BbsB. This Geobacter metallireducens (strain ATCC 53774 / DSM 7210 / GS-15) protein is Benzoylsuccinyl-CoA thiolase subunit BbsA.